The following is a 466-amino-acid chain: ATP synthase subunit beta (466 aa).

155–162 is an ATP binding site; sequence GGAGVGKT.

It belongs to the ATPase alpha/beta chains family. As to quaternary structure, F-type ATPases have 2 components, CF(1) - the catalytic core - and CF(0) - the membrane proton channel. CF(1) has five subunits: alpha(3), beta(3), gamma(1), delta(1), epsilon(1). CF(0) has three main subunits: a(1), b(2) and c(9-12). The alpha and beta chains form an alternating ring which encloses part of the gamma chain. CF(1) is attached to CF(0) by a central stalk formed by the gamma and epsilon chains, while a peripheral stalk is formed by the delta and b chains.

It localises to the cell inner membrane. It carries out the reaction ATP + H2O + 4 H(+)(in) = ADP + phosphate + 5 H(+)(out). In terms of biological role, produces ATP from ADP in the presence of a proton gradient across the membrane. The catalytic sites are hosted primarily by the beta subunits. The protein is ATP synthase subunit beta of Bordetella avium (strain 197N).